Here is a 281-residue protein sequence, read N- to C-terminus: Urease accessory protein UreD (281 aa).

The interval 1–25 is disordered; it reads MLNTLEPQPCETDALSPRLQRSTGS.

This sequence belongs to the UreD family. As to quaternary structure, ureD, UreF and UreG form a complex that acts as a GTP-hydrolysis-dependent molecular chaperone, activating the urease apoprotein by helping to assemble the nickel containing metallocenter of UreC. The UreE protein probably delivers the nickel.

The protein resides in the cytoplasm. Its function is as follows. Required for maturation of urease via the functional incorporation of the urease nickel metallocenter. In Dinoroseobacter shibae (strain DSM 16493 / NCIMB 14021 / DFL 12), this protein is Urease accessory protein UreD.